The chain runs to 217 residues: 3,4-dihydroxy-2-butanone 4-phosphate synthase (217 aa).

D-ribulose 5-phosphate contacts are provided by residues 37-38 (RE), D42, 150-154 (RRGHT), and E174. Position 38 (E38) interacts with Mg(2+). H153 is a binding site for Mg(2+).

It belongs to the DHBP synthase family. Homodimer. Mg(2+) is required as a cofactor. It depends on Mn(2+) as a cofactor.

It carries out the reaction D-ribulose 5-phosphate = (2S)-2-hydroxy-3-oxobutyl phosphate + formate + H(+). Its pathway is cofactor biosynthesis; riboflavin biosynthesis; 2-hydroxy-3-oxobutyl phosphate from D-ribulose 5-phosphate: step 1/1. Catalyzes the conversion of D-ribulose 5-phosphate to formate and 3,4-dihydroxy-2-butanone 4-phosphate. This is 3,4-dihydroxy-2-butanone 4-phosphate synthase from Tolumonas auensis (strain DSM 9187 / NBRC 110442 / TA 4).